Reading from the N-terminus, the 393-residue chain is Elongation factor Tu (393 aa).

Residues 10–203 form the tr-type G domain; sequence KPHVNIGTIG…AVDSFIPDPV (194 aa). The G1 stretch occupies residues 19 to 26; the sequence is GHVDHGKT. Residue 19 to 26 participates in GTP binding; it reads GHVDHGKT. Thr26 lines the Mg(2+) pocket. A G2 region spans residues 60 to 64; that stretch reads GITIS. Positions 81–84 are G3; it reads DCPG. GTP contacts are provided by residues 81–85 and 136–139; these read DCPGH and NKVD. Residues 136 to 139 are G4; it reads NKVD. Residues 173-175 are G5; it reads SAL.

This sequence belongs to the TRAFAC class translation factor GTPase superfamily. Classic translation factor GTPase family. EF-Tu/EF-1A subfamily. Monomer.

Its subcellular location is the cytoplasm. It catalyses the reaction GTP + H2O = GDP + phosphate + H(+). Its function is as follows. GTP hydrolase that promotes the GTP-dependent binding of aminoacyl-tRNA to the A-site of ribosomes during protein biosynthesis. The polypeptide is Elongation factor Tu (Pelodictyon phaeoclathratiforme (strain DSM 5477 / BU-1)).